The following is a 123-amino-acid chain: PTS-dependent dihydroxyacetone kinase, phosphotransferase subunit DhaM (123 aa).

In terms of domain architecture, PTS EIIA type-4 spans 2-123; the sequence is TYGIVIVSHS…EQLEKMLIEK (122 aa). His10 acts as the Tele-phosphohistidine intermediate; for EIIA activity in catalysis.

As to quaternary structure, homodimer. The dihydroxyacetone kinase complex is composed of a homodimer of DhaM, a homodimer of DhaK and the subunit DhaL.

It catalyses the reaction dihydroxyacetone + phosphoenolpyruvate = dihydroxyacetone phosphate + pyruvate. Its pathway is polyol metabolism; glycerol degradation. Functionally, component of the dihydroxyacetone kinase complex, which is responsible for the phosphoenolpyruvate (PEP)-dependent phosphorylation of dihydroxyacetone. DhaM serves as the phosphoryl donor. Is phosphorylated by phosphoenolpyruvate in an EI- and HPr-dependent reaction, and a phosphorelay system on histidine residues finally leads to phosphoryl transfer to DhaL and dihydroxyacetone. This Lactococcus lactis subsp. lactis (strain IL1403) (Streptococcus lactis) protein is PTS-dependent dihydroxyacetone kinase, phosphotransferase subunit DhaM.